Consider the following 130-residue polypeptide: Large ribosomal subunit protein bL17 (130 aa).

The protein belongs to the bacterial ribosomal protein bL17 family. As to quaternary structure, part of the 50S ribosomal subunit. Contacts protein L32.

The chain is Large ribosomal subunit protein bL17 from Nitrosomonas eutropha (strain DSM 101675 / C91 / Nm57).